Reading from the N-terminus, the 942-residue chain is Cilia- and flagella-associated protein 69 (942 aa).

Residues 1–16 (MSTAEASATTADAAEA) are compositionally biased toward low complexity. The segment at 1–25 (MSTAEASATTADAAEAGGRTKTGSP) is disordered.

In terms of tissue distribution, expressed in ciliated olfactory sensory neurons (at protein level). Expressed in testis, specifically in sperm (at protein level).

Its subcellular location is the cell projection. The protein resides in the cilium. It localises to the flagellum. Cilium- and flagellum-associated protein. In the olfactory epithelium, regulates the speed of activation and termination of the odor response and thus contributes to the robustness of olfactory transduction pathways. Required for sperm flagellum assembly and stability. This Mus musculus (Mouse) protein is Cilia- and flagella-associated protein 69.